The following is a 477-amino-acid chain: Cytochrome P450 708A2 (477 aa).

Residues 3-23 (FVWSAAVWVIAVAAVVISKWL) form a helical membrane-spanning segment. Residue C426 coordinates heme.

It belongs to the cytochrome P450 family. It depends on heme as a cofactor. As to expression, expressed primarily in the root epidermis.

It localises to the membrane. In terms of biological role, hydroxylates thalianol into thalian-diol. This Arabidopsis thaliana (Mouse-ear cress) protein is Cytochrome P450 708A2 (CYP708A2).